The sequence spans 201 residues: NADH-quinone oxidoreductase subunit C (201 aa).

This sequence belongs to the complex I 30 kDa subunit family. In terms of assembly, NDH-1 is composed of 14 different subunits. Subunits NuoB, C, D, E, F, and G constitute the peripheral sector of the complex.

Its subcellular location is the cell inner membrane. The catalysed reaction is a quinone + NADH + 5 H(+)(in) = a quinol + NAD(+) + 4 H(+)(out). Functionally, NDH-1 shuttles electrons from NADH, via FMN and iron-sulfur (Fe-S) centers, to quinones in the respiratory chain. The immediate electron acceptor for the enzyme in this species is believed to be ubiquinone. Couples the redox reaction to proton translocation (for every two electrons transferred, four hydrogen ions are translocated across the cytoplasmic membrane), and thus conserves the redox energy in a proton gradient. The polypeptide is NADH-quinone oxidoreductase subunit C (Mesorhizobium japonicum (strain LMG 29417 / CECT 9101 / MAFF 303099) (Mesorhizobium loti (strain MAFF 303099))).